Consider the following 370-residue polypeptide: MLLASTTSAVPRTLSPPTPAGNGSRELLDTRDPLLVQAELALLSTVFVAVALSNGLVLGALARRVRRGRWAPMHVFIGHLCLADLAVALFQVLPQLAWDATDRFRGPDALCRAVKYLQMVGMYASSYMILAMTLDRHRAICRPMLAYRHGGGARWNRPVLVAWAFSLILSLPQLFIFAQRDVGNGSGVLDCWAHFAEPWGLRAYVTWIALMVFVAPALGIAACQVLIFREIHSSLVPGPAERAGGCRGGHRTGSPSEGARVSAAMAKTVRMTLVIVIVYVLCWAPFFLVQLWAAWDPQAPLEGAPFVLLMLLASLNSCTNPWIYAFFSSSVSSELRSLFCWARSRAPPSLGPQEESCATASSFLAKDTSS.

Residues 1–10 show a composition bias toward polar residues; sequence MLLASTTSAV. The tract at residues 1 to 26 is disordered; it reads MLLASTTSAVPRTLSPPTPAGNGSRE. Residues 1–37 are Extracellular-facing; the sequence is MLLASTTSAVPRTLSPPTPAGNGSRELLDTRDPLLVQ. The N-linked (GlcNAc...) asparagine glycan is linked to Asn-22. The helical transmembrane segment at 38-62 threads the bilayer; that stretch reads AELALLSTVFVAVALSNGLVLGALA. At 63–76 the chain is on the cytoplasmic side; it reads RRVRRGRWAPMHVF. The helical transmembrane segment at 77–97 threads the bilayer; that stretch reads IGHLCLADLAVALFQVLPQLA. The Extracellular portion of the chain corresponds to 98–112; that stretch reads WDATDRFRGPDALCR. Residues 113–134 traverse the membrane as a helical segment; sequence AVKYLQMVGMYASSYMILAMTL. Over 135–158 the chain is Cytoplasmic; sequence DRHRAICRPMLAYRHGGGARWNRP. The chain crosses the membrane as a helical span at residues 159–179; the sequence is VLVAWAFSLILSLPQLFIFAQ. Topologically, residues 180 to 199 are extracellular; the sequence is RDVGNGSGVLDCWAHFAEPW. Residues 200 to 219 traverse the membrane as a helical segment; sequence GLRAYVTWIALMVFVAPALG. The Cytoplasmic portion of the chain corresponds to 220–270; that stretch reads IAACQVLIFREIHSSLVPGPAERAGGCRGGHRTGSPSEGARVSAAMAKTVR. The chain crosses the membrane as a helical span at residues 271 to 292; the sequence is MTLVIVIVYVLCWAPFFLVQLW. Residues 293-307 are Extracellular-facing; sequence AAWDPQAPLEGAPFV. A helical membrane pass occupies residues 308–327; the sequence is LLMLLASLNSCTNPWIYAFF. Residues 328-370 are Cytoplasmic-facing; that stretch reads SSSVSSELRSLFCWARSRAPPSLGPQEESCATASSFLAKDTSS. Cys-340 carries S-palmitoyl cysteine lipidation.

It belongs to the G-protein coupled receptor 1 family. Vasopressin/oxytocin receptor subfamily. Interacts with ARRDC4. Identified in a complex containing at least ARRDC4, V2R and HGS. Interacts with TMEM147.

Its subcellular location is the cell membrane. Its function is as follows. Receptor for arginine vasopressin. The activity of this receptor is mediated by G proteins which activate adenylate cyclase. Involved in renal water reabsorption. The protein is Vasopressin V2 receptor (AVPR2) of Canis lupus familiaris (Dog).